The sequence spans 294 residues: tRNA dimethylallyltransferase (294 aa).

10–17 (GPTAVGKT) contacts ATP. Residue 12-17 (TAVGKT) coordinates substrate. The tract at residues 35–38 (DSQQ) is interaction with substrate tRNA.

This sequence belongs to the IPP transferase family. Monomer. Mg(2+) is required as a cofactor.

It catalyses the reaction adenosine(37) in tRNA + dimethylallyl diphosphate = N(6)-dimethylallyladenosine(37) in tRNA + diphosphate. Functionally, catalyzes the transfer of a dimethylallyl group onto the adenine at position 37 in tRNAs that read codons beginning with uridine, leading to the formation of N6-(dimethylallyl)adenosine (i(6)A). This chain is tRNA dimethylallyltransferase, found in Streptococcus sanguinis (strain SK36).